Consider the following 426-residue polypeptide: Dihydroorotase (426 aa).

Zn(2+) contacts are provided by His58 and His60. Residues 60–62 (HLR) and Asn92 contribute to the substrate site. Zn(2+)-binding residues include Asp150, His177, and His230. A substrate-binding site is contributed by Asn276. Asp303 is a binding site for Zn(2+). Asp303 is an active-site residue. Residues His307 and 321-322 (FG) each bind substrate.

Belongs to the metallo-dependent hydrolases superfamily. DHOase family. Class I DHOase subfamily. It depends on Zn(2+) as a cofactor.

It catalyses the reaction (S)-dihydroorotate + H2O = N-carbamoyl-L-aspartate + H(+). Its pathway is pyrimidine metabolism; UMP biosynthesis via de novo pathway; (S)-dihydroorotate from bicarbonate: step 3/3. Its function is as follows. Catalyzes the reversible cyclization of carbamoyl aspartate to dihydroorotate. The polypeptide is Dihydroorotase (Listeria monocytogenes serotype 4b (strain F2365)).